Here is a 214-residue protein sequence, read N- to C-terminus: Killer cell lectin-like receptor subfamily B member 1 (214 aa).

At 1 to 42 (MDAPVLYAELNLAETRGLRCTSAPSLPQDACQGPGWHRVALK) the chain is on the cytoplasmic side. A helical; Signal-anchor for type II membrane protein transmembrane segment spans residues 43–63 (LGCAGLIFLLMVLSVLVGFLV). The Extracellular portion of the chain corresponds to 64–214 (QKPLIEKCSV…WICQKTLKHV (151 aa)). Residues 98–208 (HCDKCLFTSQ…CSSDNHWICQ (111 aa)) enclose the C-type lectin domain. Disulfide bonds link C119–C207 and C186–C199.

The protein localises to the membrane. This chain is Killer cell lectin-like receptor subfamily B member 1 (Klrb1), found in Mus musculus (Mouse).